Here is an 86-residue protein sequence, read N- to C-terminus: Large ribosomal subunit protein bL27 (86 aa).

Belongs to the bacterial ribosomal protein bL27 family.

In Flavobacterium johnsoniae (strain ATCC 17061 / DSM 2064 / JCM 8514 / BCRC 14874 / CCUG 350202 / NBRC 14942 / NCIMB 11054 / UW101) (Cytophaga johnsonae), this protein is Large ribosomal subunit protein bL27.